The following is a 152-amino-acid chain: Transcriptional regulator MraZ (152 aa).

SpoVT-AbrB domains follow at residues Ala-5–Glu-52 and Ala-81–Ala-124.

This sequence belongs to the MraZ family. Forms oligomers.

It localises to the cytoplasm. The protein localises to the nucleoid. The protein is Transcriptional regulator MraZ of Shewanella putrefaciens (strain CN-32 / ATCC BAA-453).